A 118-amino-acid polypeptide reads, in one-letter code: Mediator of RNA polymerase II transcription subunit 11 (118 aa).

The protein belongs to the Mediator complex subunit 11 family. Component of the Mediator complex.

It localises to the nucleus. Functionally, component of the Mediator complex, a coactivator involved in the regulated transcription of nearly all RNA polymerase II-dependent genes. Mediator functions as a bridge to convey information from gene-specific regulatory proteins to the basal RNA polymerase II transcription machinery. Mediator is recruited to promoters by direct interactions with regulatory proteins and serves as a scaffold for the assembly of a functional pre-initiation complex with RNA polymerase II and the general transcription factors. This chain is Mediator of RNA polymerase II transcription subunit 11 (med11), found in Xenopus tropicalis (Western clawed frog).